The following is a 241-amino-acid chain: UDP-2,3-diacylglucosamine hydrolase (241 aa).

Positions 8, 10, 41, 79, and 114 each coordinate Mn(2+). Residue 79-80 (NR) coordinates substrate. Substrate is bound by residues Asp122, Ser160, Asn164, Lys167, and His195. 2 residues coordinate Mn(2+): His195 and His197.

The protein belongs to the LpxH family. It depends on Mn(2+) as a cofactor.

The protein localises to the cell inner membrane. The enzyme catalyses UDP-2-N,3-O-bis[(3R)-3-hydroxytetradecanoyl]-alpha-D-glucosamine + H2O = 2-N,3-O-bis[(3R)-3-hydroxytetradecanoyl]-alpha-D-glucosaminyl 1-phosphate + UMP + 2 H(+). Its pathway is glycolipid biosynthesis; lipid IV(A) biosynthesis; lipid IV(A) from (3R)-3-hydroxytetradecanoyl-[acyl-carrier-protein] and UDP-N-acetyl-alpha-D-glucosamine: step 4/6. In terms of biological role, hydrolyzes the pyrophosphate bond of UDP-2,3-diacylglucosamine to yield 2,3-diacylglucosamine 1-phosphate (lipid X) and UMP by catalyzing the attack of water at the alpha-P atom. Involved in the biosynthesis of lipid A, a phosphorylated glycolipid that anchors the lipopolysaccharide to the outer membrane of the cell. The sequence is that of UDP-2,3-diacylglucosamine hydrolase from Aeromonas hydrophila subsp. hydrophila (strain ATCC 7966 / DSM 30187 / BCRC 13018 / CCUG 14551 / JCM 1027 / KCTC 2358 / NCIMB 9240 / NCTC 8049).